The following is a 434-amino-acid chain: Glutamate-1-semialdehyde 2,1-aminomutase 1 (434 aa).

Position 270 is an N6-(pyridoxal phosphate)lysine (lysine 270).

The protein belongs to the class-III pyridoxal-phosphate-dependent aminotransferase family. HemL subfamily. Homodimer. Pyridoxal 5'-phosphate serves as cofactor.

The protein localises to the cytoplasm. The enzyme catalyses (S)-4-amino-5-oxopentanoate = 5-aminolevulinate. The protein operates within porphyrin-containing compound metabolism; protoporphyrin-IX biosynthesis; 5-aminolevulinate from L-glutamyl-tRNA(Glu): step 2/2. In Bacillus thuringiensis (strain Al Hakam), this protein is Glutamate-1-semialdehyde 2,1-aminomutase 1.